The chain runs to 352 residues: MDLGTEIKSDTRQEEQRHVFEDYPEPLRYTTWVLRVSIHCEGCKRKIKKILSKIDGVYTTNIDVKQQKVTVIGNVEPEILIKKIMKAGRHAELWPTSMENNINNDCNYQKKPKKDNEETSGDEDDDENNNNNNGGGDVGGGGGGGGGNFDQVKQVVTFVNGQLQPQGDGAPKKKKKKKKKKKSLGNTTVVMEGGGGGGGGGGPPQNDGPPETVIYSAPQDHHIIHGPPPHLHHHQQQNHPYPTVHSPPRHHPQQMYGPGPGLPPPSFYHTQPQTAPSYTVSYNTVHGPINNGGNETASYYTAPPSHPTSYYSYEYVDTGYESPPPEFYSYRSQPSESFESLSEGNPNSCCVM.

The HMA domain occupies 29–92 (YTTWVLRVSI…KIMKAGRHAE (64 aa)). Cys-40 and Cys-43 together coordinate a metal cation. Disordered stretches follow at residues 96–150 (TSME…GNFD), 162–211 (QLQP…GPPE), and 229–252 (PHLH…RHHP). Polar residues predominate over residues 97–107 (SMENNINNDCN). A compositionally biased stretch (acidic residues) spans 118–128 (ETSGDEDDDEN). Gly residues predominate over residues 133–148 (NGGGDVGGGGGGGGGN). Residues 172-183 (KKKKKKKKKKKS) show a composition bias toward basic residues. Positions 192–203 (EGGGGGGGGGGP) are enriched in gly residues. Cys-349 carries the cysteine methyl ester modification. A lipid anchor (S-farnesyl cysteine) is attached at Cys-349. Positions 350 to 352 (CVM) are cleaved as a propeptide — removed in mature form.

The protein belongs to the HIPP family.

Its function is as follows. Heavy-metal-binding protein. The polypeptide is Heavy metal-associated isoprenylated plant protein 36 (Arabidopsis thaliana (Mouse-ear cress)).